Consider the following 376-residue polypeptide: Chaperone protein DnaJ (376 aa).

The 65-residue stretch at 5–69 folds into the J domain; sequence DYYEILGVDR…EKRARYDRFG (65 aa). A CR-type zinc finger spans residues 135–217; the sequence is GLETDIRVPH…CNGKGVVRKT (83 aa). Zn(2+)-binding residues include cysteine 148, cysteine 151, cysteine 165, cysteine 168, cysteine 191, cysteine 194, cysteine 205, and cysteine 208. 4 CXXCXGXG motif repeats span residues 148 to 155, 165 to 172, 191 to 198, and 205 to 212; these read CPVCHGSR, CQTCGGSG, CPDCQGEG, and CSNCNGKG.

Belongs to the DnaJ family. In terms of assembly, homodimer. The cofactor is Zn(2+).

It is found in the cytoplasm. In terms of biological role, participates actively in the response to hyperosmotic and heat shock by preventing the aggregation of stress-denatured proteins and by disaggregating proteins, also in an autonomous, DnaK-independent fashion. Unfolded proteins bind initially to DnaJ; upon interaction with the DnaJ-bound protein, DnaK hydrolyzes its bound ATP, resulting in the formation of a stable complex. GrpE releases ADP from DnaK; ATP binding to DnaK triggers the release of the substrate protein, thus completing the reaction cycle. Several rounds of ATP-dependent interactions between DnaJ, DnaK and GrpE are required for fully efficient folding. Also involved, together with DnaK and GrpE, in the DNA replication of plasmids through activation of initiation proteins. The polypeptide is Chaperone protein DnaJ (Methanothermobacter thermautotrophicus (strain ATCC 29096 / DSM 1053 / JCM 10044 / NBRC 100330 / Delta H) (Methanobacterium thermoautotrophicum)).